The sequence spans 185 residues: Homeobox expressed in ES cells 1 (185 aa).

Positions Lys32 to Thr69 are disordered. Positions Gly108–Arg167 form a DNA-binding region, homeobox.

It belongs to the ANF homeobox family. As to quaternary structure, can form heterodimers with PROP1 in binding to DNA Interacts with TLE1. As to expression, high levels found in the embryonic liver, lower level expression seen in the viscera, amnion and yolk sac.

It is found in the nucleus. Its function is as follows. Required for the normal development of the forebrain, eyes and other anterior structures such as the olfactory placodes and pituitary gland. Possible transcriptional repressor. Binds to the palindromic PIII sequence, 5'-AGCTTGAGTCTAATTGAATTAACTGTAC-3'. HESX1 and PROP1 bind as heterodimers on this palindromic site, and, in vitro, HESX1 can antagonize PROP1 activation. The chain is Homeobox expressed in ES cells 1 (Hesx1) from Mus musculus (Mouse).